Consider the following 873-residue polypeptide: Alanine--tRNA ligase (873 aa).

Residues His-562, His-566, Cys-663, and His-667 each contribute to the Zn(2+) site.

It belongs to the class-II aminoacyl-tRNA synthetase family. Zn(2+) serves as cofactor.

The protein resides in the cytoplasm. It carries out the reaction tRNA(Ala) + L-alanine + ATP = L-alanyl-tRNA(Ala) + AMP + diphosphate. Its function is as follows. Catalyzes the attachment of alanine to tRNA(Ala) in a two-step reaction: alanine is first activated by ATP to form Ala-AMP and then transferred to the acceptor end of tRNA(Ala). Also edits incorrectly charged Ser-tRNA(Ala) and Gly-tRNA(Ala) via its editing domain. The chain is Alanine--tRNA ligase from Bordetella petrii (strain ATCC BAA-461 / DSM 12804 / CCUG 43448).